The chain runs to 335 residues: Nucleoid-associated protein Ent638_2782 (335 aa).

The protein belongs to the YejK family.

The protein resides in the cytoplasm. It is found in the nucleoid. The protein is Nucleoid-associated protein Ent638_2782 of Enterobacter sp. (strain 638).